An 860-amino-acid polypeptide reads, in one-letter code: Alanine--tRNA ligase (860 aa).

4 residues coordinate Zn(2+): H553, H557, C655, and H659.

Belongs to the class-II aminoacyl-tRNA synthetase family. Requires Zn(2+) as cofactor.

Its subcellular location is the cytoplasm. It carries out the reaction tRNA(Ala) + L-alanine + ATP = L-alanyl-tRNA(Ala) + AMP + diphosphate. Catalyzes the attachment of alanine to tRNA(Ala) in a two-step reaction: alanine is first activated by ATP to form Ala-AMP and then transferred to the acceptor end of tRNA(Ala). Also edits incorrectly charged Ser-tRNA(Ala) and Gly-tRNA(Ala) via its editing domain. This Legionella pneumophila (strain Lens) protein is Alanine--tRNA ligase.